Reading from the N-terminus, the 293-residue chain is 33 kDa chaperonin (293 aa).

2 disulfides stabilise this stretch: C238–C240 and C271–C274.

Belongs to the HSP33 family. In terms of processing, under oxidizing conditions two disulfide bonds are formed involving the reactive cysteines. Under reducing conditions zinc is bound to the reactive cysteines and the protein is inactive.

Its subcellular location is the cytoplasm. Functionally, redox regulated molecular chaperone. Protects both thermally unfolding and oxidatively damaged proteins from irreversible aggregation. Plays an important role in the bacterial defense system toward oxidative stress. This is 33 kDa chaperonin from Staphylococcus aureus (strain Mu3 / ATCC 700698).